A 225-amino-acid chain; its full sequence is Protein-L-isoaspartate O-methyltransferase (225 aa).

Residue serine 75 is part of the active site.

It belongs to the methyltransferase superfamily. L-isoaspartyl/D-aspartyl protein methyltransferase family.

The protein resides in the cytoplasm. It catalyses the reaction [protein]-L-isoaspartate + S-adenosyl-L-methionine = [protein]-L-isoaspartate alpha-methyl ester + S-adenosyl-L-homocysteine. Functionally, catalyzes the methyl esterification of L-isoaspartyl residues in peptides and proteins that result from spontaneous decomposition of normal L-aspartyl and L-asparaginyl residues. It plays a role in the repair and/or degradation of damaged proteins. This Xylella fastidiosa (strain 9a5c) protein is Protein-L-isoaspartate O-methyltransferase.